A 308-amino-acid chain; its full sequence is uncharacterized protein (308 aa).

A signal peptide spans 1-18; the sequence is MKIILLFLAALASFTVHA.

This is an uncharacterized protein from Escherichia coli (strain K12).